The primary structure comprises 396 residues: Aspartic protease 1 (396 aa).

The first 15 residues, 1 to 15 (MQTFVLLALVAACSA), serve as a signal peptide directing secretion. In terms of domain architecture, Peptidase A1 spans 68 to 389 (YLGNITLGTP…DIGNGQIGFA (322 aa)). Residue Asn71 is glycosylated (N-linked (GlcNAc...) asparagine). Residue Asp86 is part of the active site. Cys99 and Cys104 are oxidised to a cystine. The active site involves Asp278. Cys313 and Cys349 are oxidised to a cystine.

It belongs to the peptidase A1 family. In terms of assembly, interacts with B.thuringiensis endotoxin Cry6Aa; the interaction prevents Cry6Aa proteolysis by host gut proteases.

Its subcellular location is the cytoplasm. The protein resides in the lysosome. The protein localises to the secreted. In terms of biological role, aspartic protease, which is part of the necrosis cell death pathway. Promotes B.thuringiensis Cry6Aa stability by preventing its proteolysis by host gut proteases. Required for Cry6Aa-induced necrotic death of intestinal cells. Cry6Aa uptake into the host intestinal cells triggers an increase in intracellular Ca(2+) levels leading to lysosome rupture and to the subsequent release of asp-1 which leads to necrosis. This is Aspartic protease 1 from Caenorhabditis elegans.